A 1099-amino-acid polypeptide reads, in one-letter code: MPKRTDLKSVLVIGSGPIVIGQAAEFDYSGTQALRVLKEEGLRVILVNSNPATIMTDPEFADATYVEPITPEVVEKIIAKERPDAILPTLGGQTALNTAIALDKNGVLEKYNVELIGANIAAIELGEDREKFKGVVERCGAESARSHIIHSMDEALKAAEDLGYPMVVRPSFTMGGLGSGLAYTEDDLRRIVGQGLQYSPTSEVLLEESILGWKEYELEMMRDKNDNVVVVCSIENFDPVGVHTGDSITVAPALTLTDREYQRLRDISIAVIREVGVDTGGCNIQFAVEPDTGRVVVIEMNPRVSRSSALASKATGFAIAKIATKLSLGYTLDEIPNDITQKTPASFEPTLDYVVVKVPRFAFEKFPAADPTLTTTMKSVGEAMAMGRNFTEALQKALRSLEQKGSQLDFSHVPEWEVPELIEKAKRPTTERLHQVQRALLGGATVEQLFEATKIDPWYLDQLQLLNEISHEIRKSTALTPEMLQRAKRHGFSDEQIGALTNNQEAVVRGVRQALGIRPVYKTVDTCAAEFAAYTPYHYSSYDEEDEVALHSKPSIIILGSGPNRIGQGIEFDYSCVHASMALRKAGYETVMVNCNPETVSTDYDVSTRLYFEPLTLEDVLEVIAAEERTGGVMGVFVQLGGQTPLKLAQQLADAGVPILGTSPEAIDLAEHRGAFSRVLDEAGLISPKNGTAVSFEDAKKIADEIGYPVLVRPSYVLGGRGMEIVYDEPNLSRYIANATEITTEHPVLIDRFLEDAVEIDVDALYDGTEMYLGGIMEHIEEAGIHSGDSACVLPPITLGNNVIERVRTATLAIAEGVGVRGLINIQFALASDVLYVLEANPRASRTVPFVSKATGVQMAKAAALIGTGVTINQLRSAYKMLPETGDGSTLPFDAPVSVKEAVLPFSRFRTPEGKVVDSLLGPEMRSTGEVMGIDKHFDTAFAKSQAAANNALPTEGKIFVSVANRDKRSVIMGVKRLSDLGFEIVSTGGTADVLRRNGIQATPVRKVAEGSSAEGEGTIADLIVAGEIDMVFNTPSGGEARIDGYELRAAATSIGIPCITTVAEFNAAVQAIEAQRTYEWSVTSLQEHAENLKALQNG.

Residues methionine 1 to glutamate 402 form a carboxyphosphate synthetic domain region. The ATP site is built by arginine 129, arginine 169, glycine 175, glycine 176, glutamate 208, isoleucine 210, glutamate 215, glycine 241, valine 242, histidine 243, glutamine 285, and glutamate 299. The region spanning lysine 133–leucine 328 is the ATP-grasp 1 domain. Mg(2+)-binding residues include glutamine 285, glutamate 299, and asparagine 301. Mn(2+)-binding residues include glutamine 285, glutamate 299, and asparagine 301. An oligomerization domain region spans residues glutamine 403–aspartate 546. Residues glutamate 547–asparagine 950 form a carbamoyl phosphate synthetic domain region. The region spanning serine 677–threonine 868 is the ATP-grasp 2 domain. Residues arginine 713, arginine 752, leucine 754, glutamate 759, glycine 784, isoleucine 785, histidine 786, serine 787, glutamine 827, and glutamate 839 each coordinate ATP. Residues glutamine 827, glutamate 839, and asparagine 841 each contribute to the Mg(2+) site. Mn(2+)-binding residues include glutamine 827, glutamate 839, and asparagine 841. Positions asparagine 951–glycine 1099 constitute an MGS-like domain. An allosteric domain region spans residues asparagine 951 to glycine 1099.

This sequence belongs to the CarB family. As to quaternary structure, composed of two chains; the small (or glutamine) chain promotes the hydrolysis of glutamine to ammonia, which is used by the large (or ammonia) chain to synthesize carbamoyl phosphate. Tetramer of heterodimers (alpha,beta)4. Mg(2+) is required as a cofactor. It depends on Mn(2+) as a cofactor.

It catalyses the reaction hydrogencarbonate + L-glutamine + 2 ATP + H2O = carbamoyl phosphate + L-glutamate + 2 ADP + phosphate + 2 H(+). The catalysed reaction is hydrogencarbonate + NH4(+) + 2 ATP = carbamoyl phosphate + 2 ADP + phosphate + 2 H(+). Its pathway is amino-acid biosynthesis; L-arginine biosynthesis; carbamoyl phosphate from bicarbonate: step 1/1. The protein operates within pyrimidine metabolism; UMP biosynthesis via de novo pathway; (S)-dihydroorotate from bicarbonate: step 1/3. Its function is as follows. Large subunit of the glutamine-dependent carbamoyl phosphate synthetase (CPSase). CPSase catalyzes the formation of carbamoyl phosphate from the ammonia moiety of glutamine, carbonate, and phosphate donated by ATP, constituting the first step of 2 biosynthetic pathways, one leading to arginine and/or urea and the other to pyrimidine nucleotides. The large subunit (synthetase) binds the substrates ammonia (free or transferred from glutamine from the small subunit), hydrogencarbonate and ATP and carries out an ATP-coupled ligase reaction, activating hydrogencarbonate by forming carboxy phosphate which reacts with ammonia to form carbamoyl phosphate. The protein is Carbamoyl phosphate synthase large chain of Arthrobacter sp. (strain FB24).